The sequence spans 194 residues: Imidazoleglycerol-phosphate dehydratase (194 aa).

The protein belongs to the imidazoleglycerol-phosphate dehydratase family.

It localises to the cytoplasm. It carries out the reaction D-erythro-1-(imidazol-4-yl)glycerol 3-phosphate = 3-(imidazol-4-yl)-2-oxopropyl phosphate + H2O. It participates in amino-acid biosynthesis; L-histidine biosynthesis; L-histidine from 5-phospho-alpha-D-ribose 1-diphosphate: step 6/9. This Listeria monocytogenes serotype 4a (strain HCC23) protein is Imidazoleglycerol-phosphate dehydratase.